The sequence spans 95 residues: MKIRPLHDRVVVRRKEEEEKTAGGIVLPGNAKEKPSQGEVIAVGNGRILDNGETRALAVKVGDTVVFGQYAGNTVKVDGEELLIMSENDIYGVLE.

The protein belongs to the GroES chaperonin family. Heptamer of 7 subunits arranged in a ring. Interacts with the chaperonin GroEL.

The protein resides in the cytoplasm. Functionally, together with the chaperonin GroEL, plays an essential role in assisting protein folding. The GroEL-GroES system forms a nano-cage that allows encapsulation of the non-native substrate proteins and provides a physical environment optimized to promote and accelerate protein folding. GroES binds to the apical surface of the GroEL ring, thereby capping the opening of the GroEL channel. The polypeptide is Co-chaperonin GroES (Marinobacter nauticus (strain ATCC 700491 / DSM 11845 / VT8) (Marinobacter aquaeolei)).